Here is an 834-residue protein sequence, read N- to C-terminus: Meiotic sister-chromatid recombination protein 3 (834 aa).

Disordered stretches follow at residues 75-136, 251-291, 343-378, and 458-479; these read PAAA…QPRT, EETE…TGSL, RKLAQPQQGQNQRRTVSFTQGSIDHMNTTKKKKQPL, and VRRSKSMTGSAVPPQAGKKKLT. The span at 343–368 shows a compositional bias: polar residues; it reads RKLAQPQQGQNQRRTVSFTQGSIDHM.

It is found in the cell membrane. In terms of biological role, may be involved in the control of meiotic sister-chromatid recombination. This Candida glabrata (strain ATCC 2001 / BCRC 20586 / JCM 3761 / NBRC 0622 / NRRL Y-65 / CBS 138) (Yeast) protein is Meiotic sister-chromatid recombination protein 3 (MSC3).